The chain runs to 348 residues: Protein RecA (348 aa).

66-73 (GPESSGKT) lines the ATP pocket.

This sequence belongs to the RecA family.

The protein resides in the cytoplasm. Functionally, can catalyze the hydrolysis of ATP in the presence of single-stranded DNA, the ATP-dependent uptake of single-stranded DNA by duplex DNA, and the ATP-dependent hybridization of homologous single-stranded DNAs. It interacts with LexA causing its activation and leading to its autocatalytic cleavage. This Neisseria meningitidis serogroup B (strain ATCC BAA-335 / MC58) protein is Protein RecA.